The sequence spans 454 residues: Probable ECA polymerase (454 aa).

11 helical membrane-spanning segments follow: residues 3-23, 39-59, 61-81, 119-139, 154-174, 180-200, 201-221, 222-242, 340-360, 377-397, and 409-429; these read LGQF…ILTL, FSML…MLVF, FGVA…ATAF, LALV…FLLF, GVAL…VYFL, AWFF…VIVG, GTRA…IVRG, WITL…MFWL, LVVM…GLII, YKAA…IVLA, and VFFC…YWLF.

Belongs to the WzyE family. As to quaternary structure, probably part of a complex composed of WzxE, WzyE and WzzE.

It localises to the cell inner membrane. It participates in bacterial outer membrane biogenesis; enterobacterial common antigen biosynthesis. Probably involved in the polymerization of enterobacterial common antigen (ECA) trisaccharide repeat units. The protein is Probable ECA polymerase of Yersinia pestis bv. Antiqua (strain Angola).